The sequence spans 438 residues: Chromosomal replication initiator protein DnaA (438 aa).

Residues 1–71 form a domain I, interacts with DnaA modulators region; the sequence is MTELDSLWEA…VEIVYQRTGQ (71 aa). The interval 71–101 is domain II; that stretch reads QEIRPDYVLATDPTPLAQTPPRPQSTFKEET. Positions 81-100 are disordered; that stretch reads TDPTPLAQTPPRPQSTFKEE. The domain III, AAA+ region stretch occupies residues 102–318; that stretch reads PLNPEYTFQT…GALMRIRVFS (217 aa). Glycine 146, glycine 148, lysine 149, and threonine 150 together coordinate ATP. The tract at residues 319 to 438 is domain IV, binds dsDNA; sequence ELHQQPITLK…LVKLKNDLQA (120 aa).

The protein belongs to the DnaA family. In terms of assembly, oligomerizes as a right-handed, spiral filament on DNA at oriC.

Its subcellular location is the cytoplasm. In terms of biological role, plays an essential role in the initiation and regulation of chromosomal replication. ATP-DnaA binds to the origin of replication (oriC) to initiate formation of the DNA replication initiation complex once per cell cycle. Binds the DnaA box (a 9 base pair repeat at the origin) and separates the double-stranded (ds)DNA. Forms a right-handed helical filament on oriC DNA; dsDNA binds to the exterior of the filament while single-stranded (ss)DNA is stabiized in the filament's interior. The ATP-DnaA-oriC complex binds and stabilizes one strand of the AT-rich DNA unwinding element (DUE), permitting loading of DNA polymerase. After initiation quickly degrades to an ADP-DnaA complex that is not apt for DNA replication. Binds acidic phospholipids. This chain is Chromosomal replication initiator protein DnaA, found in Limosilactobacillus fermentum (strain NBRC 3956 / LMG 18251) (Lactobacillus fermentum).